A 341-amino-acid chain; its full sequence is Uroporphyrinogen decarboxylase (341 aa).

Substrate is bound by residues 26 to 30 (RQAGR), Asp75, Tyr150, Ser205, and His318.

Belongs to the uroporphyrinogen decarboxylase family. Homodimer.

The protein localises to the cytoplasm. The enzyme catalyses uroporphyrinogen III + 4 H(+) = coproporphyrinogen III + 4 CO2. It functions in the pathway porphyrin-containing compound metabolism; protoporphyrin-IX biosynthesis; coproporphyrinogen-III from 5-aminolevulinate: step 4/4. In terms of biological role, catalyzes the decarboxylation of four acetate groups of uroporphyrinogen-III to yield coproporphyrinogen-III. The sequence is that of Uroporphyrinogen decarboxylase from Thermus thermophilus (strain ATCC BAA-163 / DSM 7039 / HB27).